We begin with the raw amino-acid sequence, 377 residues long: Queuine tRNA-ribosyltransferase (377 aa).

Catalysis depends on D91, which acts as the Proton acceptor. Substrate-binding positions include 91-95 (DSGGF), D145, Q189, and G216. Residues 247–253 (GVGKPED) are RNA binding. D266 serves as the catalytic Nucleophile. The RNA binding; important for wobble base 34 recognition stretch occupies residues 271 to 275 (TRNAR). Zn(2+) contacts are provided by C304, C306, C309, and H335.

This sequence belongs to the queuine tRNA-ribosyltransferase family. Homodimer. Within each dimer, one monomer is responsible for RNA recognition and catalysis, while the other monomer binds to the replacement base PreQ1. Zn(2+) is required as a cofactor.

It catalyses the reaction 7-aminomethyl-7-carbaguanine + guanosine(34) in tRNA = 7-aminomethyl-7-carbaguanosine(34) in tRNA + guanine. It functions in the pathway tRNA modification; tRNA-queuosine biosynthesis. Its function is as follows. Catalyzes the base-exchange of a guanine (G) residue with the queuine precursor 7-aminomethyl-7-deazaguanine (PreQ1) at position 34 (anticodon wobble position) in tRNAs with GU(N) anticodons (tRNA-Asp, -Asn, -His and -Tyr). Catalysis occurs through a double-displacement mechanism. The nucleophile active site attacks the C1' of nucleotide 34 to detach the guanine base from the RNA, forming a covalent enzyme-RNA intermediate. The proton acceptor active site deprotonates the incoming PreQ1, allowing a nucleophilic attack on the C1' of the ribose to form the product. After dissociation, two additional enzymatic reactions on the tRNA convert PreQ1 to queuine (Q), resulting in the hypermodified nucleoside queuosine (7-(((4,5-cis-dihydroxy-2-cyclopenten-1-yl)amino)methyl)-7-deazaguanosine). This is Queuine tRNA-ribosyltransferase from Vibrio parahaemolyticus serotype O3:K6 (strain RIMD 2210633).